Consider the following 895-residue polypeptide: Androgen receptor (895 aa).

Positions 1-533 (MEVQLGLGRV…PIDYYFPPQK (533 aa)) are modulating. The tract at residues 1 to 562 (MEVQLGLGRV…GSCKVFFKRA (562 aa)) is interaction with ZNF318. 2 disordered regions span residues 33–150 (VIQN…LSLL) and 175–211 (QLLQ…YLGG). Composition is skewed to low complexity over residues 44–81 (AASA…GSPQ) and 175–200 (QLLQ…ASGA). Phosphoserine; by CDK9 is present on S65. At S79 the chain carries Phosphoserine. Over residues 201–211 (PTSSKDNYLGG) the composition is skewed to polar residues. Residue Y208 is modified to Phosphotyrosine; by CSK. S241 carries the phosphoserine modification. Y252 carries the phosphotyrosine; by CSK and TNK2 modification. Phosphotyrosine; by CSK is present on residues Y292, Y331, Y342, and Y347. The residue at position 348 (Y348) is a Phosphotyrosine; by CSK and TNK2. Residue K371 forms a Glycyl lysine isopeptide (Lys-Gly) (interchain with G-Cter in SUMO) linkage. Y378 bears the Phosphotyrosine; by CSK mark. Residue K496 forms a Glycyl lysine isopeptide (Lys-Gly) (interchain with G-Cter in SUMO) linkage. Y510 and Y527 each carry phosphotyrosine; by CSK. Positions 527–894 (YYFPPQKTCL…GKVKPIYFHT (368 aa)) are interaction with LPXN. Residues 534 to 607 (TCLICGDEAS…AGMTLGARKL (74 aa)) constitute a DNA-binding region (nuclear receptor). 2 NR C4-type zinc fingers span residues 535 to 555 (CLIC…CGSC) and 571 to 595 (CASR…LRKC). The interval 547–637 (YGALTCGSCK…TEETAQKLTV (91 aa)) is interaction with HIPK3. The segment at 567–894 (QKYLCASRND…GKVKPIYFHT (328 aa)) is interaction with CCAR1. Residues 600-894 (MTLGARKLKK…GKVKPIYFHT (295 aa)) form an interaction with KAT7 region. S626 bears the Phosphoserine; by STK4/MST1 mark. The NR LBD domain occupies 644–875 (ECQPIFLNVL…DFPEMMAEII (232 aa)). Residues N681 and R728 each contribute to the 17beta-hydroxy-5alpha-androstan-3-one site. Residues K821 and K823 each participate in a glycyl lysine isopeptide (Lys-Gly) (interchain with G-Cter in ubiquitin) cross-link. T853 contacts 17beta-hydroxy-5alpha-androstan-3-one. Residue Y891 is modified to Phosphotyrosine; by CSK.

Belongs to the nuclear hormone receptor family. NR3 subfamily. As to quaternary structure, binds DNA as a homodimer. Part of a ternary complex containing AR, EFCAB6/DJBP and PARK7. Interacts with HIPK3 and NR0B2 in the presence of androgen. The ligand binding domain interacts with KAT7/HBO1 in the presence of dihydrotestosterone. Interacts with EFCAB6/DJBP, PQBP1, RANBP9, RBAK, SPDEF, SRA1, TGFB1I1 and RREB1. Interacts with ZMIZ1/ZIMP10 and ZMIZ2/ZMIP7 which both enhance its transactivation activity. Interacts with SLC30A9 and RAD54L2/ARIP4. Interacts with MACROD1 (via macro domain). Interacts via the ligand-binding domain with LXXLL and FXXLF motifs from NCOA1, NCOA2, NCOA3 and MAGEA11. Interacts (via nuclear receptor DNA binding domain and nuclear receptor ligand binding domain) with NCOA4. The AR N-terminal poly-Gln region binds Ran resulting in enhancement of AR-mediated transactivation. Ran-binding decreases as the poly-Gln length increases. Interacts with HIP1 (via coiled coil domain). Interacts (via ligand-binding domain) with TRIM68. Interacts with TNK2. Interacts with USP26. Interacts with RNF6. Interacts (regulated by RNF6 probably through polyubiquitination) with RNF14; regulates AR transcriptional activity. Interacts with PRMT2 and TRIM24. Interacts with RACK1. Interacts with RANBP10; this interaction enhances dihydrotestosterone-induced AR transcriptional activity. Interacts with PRPF6 in a hormone-independent way; this interaction enhances dihydrotestosterone-induced AR transcriptional activity. Interacts with STK4/MST1. Interacts with ZIPK/DAPK3. Interacts with LPXN. Interacts with MAK. Part of a complex containing AR, MAK and NCOA3. Interacts with CRY1. Interacts with CCAR1 and GATA2. Interacts with ZNF318. Interacts with BUD31. Interacts with ARID4A. Interacts with ARID4B. Interacts (via NR LBD domain) with ZBTB7A; the interaction is direct and androgen-dependent. Interacts with NCOR1. Interacts with NCOR2. Interacts with CRY2 in a ligand-dependent manner. Phosphorylated in prostate cancer cells in response to several growth factors including EGF. Phosphorylation is induced by c-Src kinase (CSK). Tyr-510 is one of the major phosphorylation sites and an increase in phosphorylation and Src kinase activity is associated with prostate cancer progression. Phosphorylation by TNK2 enhances the DNA-binding and transcriptional activity. Phosphorylation at Ser-65 by CDK9 regulates AR promoter selectivity and cell growth. Post-translationally, sumoylated on Lys-371 (major) and Lys-496. Ubiquitinated. Deubiquitinated by USP26. 'Lys-6' and 'Lys-27'-linked polyubiquitination by RNF6 modulates AR transcriptional activity and specificity. In terms of processing, palmitoylated by ZDHHC7 and ZDHHC21. Palmitoylation is required for plasma membrane targeting and for rapid intracellular signaling via ERK and AKT kinases and cAMP generation.

The protein localises to the nucleus. It localises to the cytoplasm. Its function is as follows. Steroid hormone receptors are ligand-activated transcription factors that regulate eukaryotic gene expression and affect cellular proliferation and differentiation in target tissues. Transcription factor activity is modulated by bound coactivator and corepressor proteins like ZBTB7A that recruits NCOR1 and NCOR2 to the androgen response elements/ARE on target genes, negatively regulating androgen receptor signaling and androgen-induced cell proliferation. Transcription activation is also down-regulated by NR0B2. Activated, but not phosphorylated, by HIPK3 and ZIPK/DAPK3. In Macaca fascicularis (Crab-eating macaque), this protein is Androgen receptor (AR).